Reading from the N-terminus, the 201-residue chain is MKAIILAGGHSERFGKAKAFAEIDGQLFYQRIVQTLQETNMFNDIIISTNDQLANQFKHDNVIIDDANNKNKGPLAGIHTVMKQYNDEELFFVISVDTPMVTGKAISALYQFLVSRLIEDQIDIAAYSEHNRVIPTIAFYHPNCINVMDEALASNDYSLRHVYNNVTTECLDVTNIQSPEYWYKNINYQEDLDDLKQQINH.

GTP is bound by residues L6 to G8, K18, D65, and D97. D97 contacts Mg(2+).

It belongs to the MobA family. Mg(2+) is required as a cofactor.

The protein localises to the cytoplasm. The enzyme catalyses Mo-molybdopterin + GTP + H(+) = Mo-molybdopterin guanine dinucleotide + diphosphate. In terms of biological role, transfers a GMP moiety from GTP to Mo-molybdopterin (Mo-MPT) cofactor (Moco or molybdenum cofactor) to form Mo-molybdopterin guanine dinucleotide (Mo-MGD) cofactor. The protein is Probable molybdenum cofactor guanylyltransferase of Staphylococcus haemolyticus (strain JCSC1435).